We begin with the raw amino-acid sequence, 114 residues long: Fumarate reductase subunit D (114 aa).

3 consecutive transmembrane segments (helical) span residues 24–44, 49–69, and 94–114; these read ISALAFPVLILILGILLPLGI, GIIAFAHHWFGKLVILVLTIF, and LIFYGLAVLYTVVAIWGVASI.

It belongs to the FrdD family. As to quaternary structure, part of an enzyme complex containing four subunits: a flavoprotein (FrdA), an iron-sulfur protein (FrdB), and two hydrophobic anchor proteins (FrdC and FrdD).

It is found in the cell inner membrane. Functionally, anchors the catalytic components of the fumarate reductase complex to the cell membrane, binds quinones. The protein is Fumarate reductase subunit D of Actinobacillus succinogenes (strain ATCC 55618 / DSM 22257 / CCUG 43843 / 130Z).